The chain runs to 131 residues: Glycine cleavage system H protein (131 aa).

The Lipoyl-binding domain occupies 24 to 106; sequence RVTVGISDHA…YGDGWMYVVE (83 aa). K65 is modified (N6-lipoyllysine).

The protein belongs to the GcvH family. The glycine cleavage system is composed of four proteins: P, T, L and H. Requires (R)-lipoate as cofactor.

In terms of biological role, the glycine cleavage system catalyzes the degradation of glycine. The H protein shuttles the methylamine group of glycine from the P protein to the T protein. The protein is Glycine cleavage system H protein of Stenotrophomonas maltophilia (strain R551-3).